Reading from the N-terminus, the 314-residue chain is Homoserine O-acetyltransferase (314 aa).

Cys-142 serves as the catalytic Acyl-thioester intermediate. Substrate is bound by residues Lys-163 and Ser-192. The active-site Proton acceptor is His-235. The active site involves Glu-237. Arg-249 contributes to the substrate binding site.

The protein belongs to the MetA family.

Its subcellular location is the cytoplasm. The enzyme catalyses L-homoserine + acetyl-CoA = O-acetyl-L-homoserine + CoA. Its pathway is amino-acid biosynthesis; L-methionine biosynthesis via de novo pathway; O-acetyl-L-homoserine from L-homoserine: step 1/1. Functionally, transfers an acetyl group from acetyl-CoA to L-homoserine, forming acetyl-L-homoserine. In Desulfovibrio desulfuricans (strain ATCC 27774 / DSM 6949 / MB), this protein is Homoserine O-acetyltransferase.